The following is a 348-amino-acid chain: D-erythrose-4-phosphate dehydrogenase (348 aa).

NAD(+) is bound by residues 12 to 13 (RI) and Arg-81. Substrate contacts are provided by residues 154–156 (SCT), Arg-200, 213–214 (TK), and Arg-236. Cys-155 (nucleophile) is an active-site residue. An NAD(+)-binding site is contributed by Asn-318.

Belongs to the glyceraldehyde-3-phosphate dehydrogenase family. Epd subfamily. Homotetramer.

Its subcellular location is the cytoplasm. It carries out the reaction D-erythrose 4-phosphate + NAD(+) + H2O = 4-phospho-D-erythronate + NADH + 2 H(+). It participates in cofactor biosynthesis; pyridoxine 5'-phosphate biosynthesis; pyridoxine 5'-phosphate from D-erythrose 4-phosphate: step 1/5. Catalyzes the NAD-dependent conversion of D-erythrose 4-phosphate to 4-phosphoerythronate. The chain is D-erythrose-4-phosphate dehydrogenase from Salmonella schwarzengrund (strain CVM19633).